The sequence spans 120 residues: NAD(P)H-quinone oxidoreductase subunit 3, chloroplastic (120 aa).

A run of 3 helical transmembrane segments spans residues Ile9–Gly29, Met64–Met84, and Val88–Leu108.

The protein belongs to the complex I subunit 3 family. As to quaternary structure, NDH is composed of at least 16 different subunits, 5 of which are encoded in the nucleus.

The protein localises to the plastid. It localises to the chloroplast thylakoid membrane. It catalyses the reaction a plastoquinone + NADH + (n+1) H(+)(in) = a plastoquinol + NAD(+) + n H(+)(out). It carries out the reaction a plastoquinone + NADPH + (n+1) H(+)(in) = a plastoquinol + NADP(+) + n H(+)(out). NDH shuttles electrons from NAD(P)H:plastoquinone, via FMN and iron-sulfur (Fe-S) centers, to quinones in the photosynthetic chain and possibly in a chloroplast respiratory chain. The immediate electron acceptor for the enzyme in this species is believed to be plastoquinone. Couples the redox reaction to proton translocation, and thus conserves the redox energy in a proton gradient. This Guizotia abyssinica (Niger) protein is NAD(P)H-quinone oxidoreductase subunit 3, chloroplastic.